The chain runs to 159 residues: Cytochrome c-type biogenesis CcmH-like mitochondrial protein (159 aa).

Residues 1 to 82 (MEKTDEERKK…ETVLYAPKFD (82 aa)) lie on the Mitochondrial intermembrane side of the membrane. Heme is bound by residues Cys-27 and Cys-30. The chain crosses the membrane as a helical span at residues 83–105 (LQTAALWLTPVIIAGGTAAGIVY). Residues 106-159 (QKHRLRKNVDIMALNLIRGVPLTPKERVTILDVLIPPSPPPQGVVSRLRRWLNR) lie on the Mitochondrial matrix side of the membrane.

Belongs to the CcmH/CycL/Ccl2/NrfF family. Interacts (via N-terminus) with CYTC-1. Interacts with CCMFN1 and CCMFN2.

Its subcellular location is the mitochondrion inner membrane. Its function is as follows. Plays a central role in mitochondrial cytochrome c maturation. Probable component of a heme lyase complex involved in the reduction of apocytochrome c. Forms a complex with CCMF proteins (CCMFC, CCMFN1 and CCMFN2) that performs the assembly of heme with c-type apocytochromes in mitochondria. In Arabidopsis thaliana (Mouse-ear cress), this protein is Cytochrome c-type biogenesis CcmH-like mitochondrial protein.